The chain runs to 100 residues: Urease subunit gamma (100 aa).

This sequence belongs to the urease gamma subunit family. Heterotrimer of UreA (gamma), UreB (beta) and UreC (alpha) subunits. Three heterotrimers associate to form the active enzyme.

Its subcellular location is the cytoplasm. It carries out the reaction urea + 2 H2O + H(+) = hydrogencarbonate + 2 NH4(+). Its pathway is nitrogen metabolism; urea degradation; CO(2) and NH(3) from urea (urease route): step 1/1. The protein is Urease subunit gamma of Acetivibrio thermocellus (strain ATCC 27405 / DSM 1237 / JCM 9322 / NBRC 103400 / NCIMB 10682 / NRRL B-4536 / VPI 7372) (Clostridium thermocellum).